The following is a 155-amino-acid chain: Small ribosomal subunit protein uS7 (155 aa).

It belongs to the universal ribosomal protein uS7 family. Part of the 30S ribosomal subunit. Contacts proteins S9 and S11.

One of the primary rRNA binding proteins, it binds directly to 16S rRNA where it nucleates assembly of the head domain of the 30S subunit. Is located at the subunit interface close to the decoding center, probably blocks exit of the E-site tRNA. The polypeptide is Small ribosomal subunit protein uS7 (Chlorobium chlorochromatii (strain CaD3)).